A 172-amino-acid polypeptide reads, in one-letter code: Adenine phosphoribosyltransferase (172 aa).

It belongs to the purine/pyrimidine phosphoribosyltransferase family. In terms of assembly, homodimer.

The protein resides in the cytoplasm. It catalyses the reaction AMP + diphosphate = 5-phospho-alpha-D-ribose 1-diphosphate + adenine. Its pathway is purine metabolism; AMP biosynthesis via salvage pathway; AMP from adenine: step 1/1. Its function is as follows. Catalyzes a salvage reaction resulting in the formation of AMP, that is energically less costly than de novo synthesis. The chain is Adenine phosphoribosyltransferase from Pediococcus pentosaceus (strain ATCC 25745 / CCUG 21536 / LMG 10740 / 183-1w).